Consider the following 190-residue polypeptide: Guanylate kinase (190 aa).

The region spanning 3-185 (NYIFIISAPS…SLEQLCKYFE (183 aa)) is the Guanylate kinase-like domain. Residue 10-17 (APSGAGKS) coordinates ATP.

The protein belongs to the guanylate kinase family.

The protein localises to the cytoplasm. It carries out the reaction GMP + ATP = GDP + ADP. In terms of biological role, essential for recycling GMP and indirectly, cGMP. This chain is Guanylate kinase, found in Francisella tularensis subsp. holarctica (strain LVS).